A 158-amino-acid polypeptide reads, in one-letter code: Serglycin (158 aa).

A signal peptide spans 1–27 (MMQKLLKCSRLVLALALILVLESSVQG). Cysteine 40 and cysteine 49 form a disulfide bridge. O-linked (Xyl...) (glycosaminoglycan) serine glycosylation is found at serine 94 and serine 96. Tandem repeats lie at residues 94–95 (SG), 96–97 (SG), 98–99 (FG), 100–101 (SG), 102–103 (SG), 104–105 (SG), 106–107 (SG), 108–109 (SG), and 110–111 (SG). The tract at residues 94–111 (SGSGFGSGSGSGSGSGSG) is 9 X 2 AA tandem repeats of [SF]-G. O-linked (Xyl...) (glycosaminoglycan) serine glycans are attached at residues serine 100, serine 102, serine 104, serine 106, serine 108, and serine 110. Positions 134–158 (RSLDRNLPSDSQDLGQHGLEEDFML) are disordered.

It belongs to the serglycin family. As to quaternary structure, binds to activated CD44 and to GZMB. O-glycosylated; contains chondroitin sulfate and heparan sulfate.

Its subcellular location is the cytoplasmic granule. It is found in the cytolytic granule. The protein localises to the secreted. It localises to the extracellular space. The protein resides in the golgi apparatus. Functionally, plays a role in formation of mast cell secretory granules and mediates storage of various compounds in secretory vesicles. Required for storage of some proteases in both connective tissue and mucosal mast cells and for storage of granzyme B in T-lymphocytes. Plays a role in localizing neutrophil elastase in azurophil granules of neutrophils. Mediates processing of MMP2. Plays a role in cytotoxic cell granule-mediated apoptosis by forming a complex with granzyme B which is delivered to cells by perforin to induce apoptosis. Regulates the secretion of TNF-alpha and may also regulate protease secretion. Inhibits bone mineralization. In Homo sapiens (Human), this protein is Serglycin (SRGN).